Here is a 266-residue protein sequence, read N- to C-terminus: 3-methyl-2-oxobutanoate hydroxymethyltransferase 2 (266 aa).

The Mg(2+) site is built by D45 and D84. Residues 45 to 46, D84, and K112 contribute to the 3-methyl-2-oxobutanoate site; that span reads DS. Residue E114 participates in Mg(2+) binding. E181 functions as the Proton acceptor in the catalytic mechanism.

Belongs to the PanB family. As to quaternary structure, homodecamer; pentamer of dimers. Requires Mg(2+) as cofactor.

Its subcellular location is the cytoplasm. The enzyme catalyses 3-methyl-2-oxobutanoate + (6R)-5,10-methylene-5,6,7,8-tetrahydrofolate + H2O = 2-dehydropantoate + (6S)-5,6,7,8-tetrahydrofolate. It participates in cofactor biosynthesis; (R)-pantothenate biosynthesis; (R)-pantoate from 3-methyl-2-oxobutanoate: step 1/2. Catalyzes the reversible reaction in which hydroxymethyl group from 5,10-methylenetetrahydrofolate is transferred onto alpha-ketoisovalerate to form ketopantoate. The chain is 3-methyl-2-oxobutanoate hydroxymethyltransferase 2 from Pseudomonas aeruginosa (strain UCBPP-PA14).